A 297-amino-acid polypeptide reads, in one-letter code: Coiled-coil domain-containing protein 196 (297 aa).

Residues 83–117 (ESSVMELLKEAEEMKQNLERKNKMLRKEMEMLWNK) adopt a coiled-coil conformation. The interval 122–161 (EELSDQQKAPQTKNKADLQDGKAPKSPSSPRKTESELEKS) is disordered. Composition is skewed to basic and acidic residues over residues 135–144 (NKADLQDGKA) and 152–161 (RKTESELEKS).

The protein is Coiled-coil domain-containing protein 196 of Homo sapiens (Human).